We begin with the raw amino-acid sequence, 338 residues long: Heat-inducible transcription repressor HrcA (338 aa).

It belongs to the HrcA family.

Its function is as follows. Negative regulator of class I heat shock genes (grpE-dnaK-dnaJ and groELS operons). Prevents heat-shock induction of these operons. This is Heat-inducible transcription repressor HrcA from Bacillus mycoides (strain KBAB4) (Bacillus weihenstephanensis).